The following is a 353-amino-acid chain: O-antigen biosynthesis glycosyltransferase WclY (353 aa).

Residues 116–136 form a helical membrane-spanning segment; it reads SLIWGLLWCSIWLFFDKLVIL. Asparagine 190 and glutamate 271 together coordinate UDP. The E(x7)E glycosyltransferase motif motif lies at 263 to 271; it reads EGFGLTVLE.

The protein belongs to the glycosyltransferase group 1 family. Glycosyltransferase 4 subfamily.

It is found in the membrane. It participates in bacterial outer membrane biogenesis; LPS O-antigen biosynthesis. In terms of biological role, involved in the assembly of the O-repeating unit during O-antigen biosynthesis. N-acetylglucosamine transferase accountable for the alpha-D-GlcNAc-1,4-beta-D-Gal linkage within the O-antigen. This chain is O-antigen biosynthesis glycosyltransferase WclY, found in Escherichia coli.